A 296-amino-acid chain; its full sequence is Bifunctional protein FolD (296 aa).

NADP(+) contacts are provided by residues 166 to 168 (GRS), serine 195, and isoleucine 236.

The protein belongs to the tetrahydrofolate dehydrogenase/cyclohydrolase family. In terms of assembly, homodimer.

It catalyses the reaction (6R)-5,10-methylene-5,6,7,8-tetrahydrofolate + NADP(+) = (6R)-5,10-methenyltetrahydrofolate + NADPH. The catalysed reaction is (6R)-5,10-methenyltetrahydrofolate + H2O = (6R)-10-formyltetrahydrofolate + H(+). It participates in one-carbon metabolism; tetrahydrofolate interconversion. Its function is as follows. Catalyzes the oxidation of 5,10-methylenetetrahydrofolate to 5,10-methenyltetrahydrofolate and then the hydrolysis of 5,10-methenyltetrahydrofolate to 10-formyltetrahydrofolate. This is Bifunctional protein FolD from Chlorobium limicola (strain DSM 245 / NBRC 103803 / 6330).